The sequence spans 190 residues: Xanthine phosphoribosyltransferase (190 aa).

Xanthine contacts are provided by L20 and N27. 128–132 serves as a coordination point for 5-phospho-alpha-D-ribose 1-diphosphate; sequence ANGKA. K156 is a xanthine binding site.

Belongs to the purine/pyrimidine phosphoribosyltransferase family. Xpt subfamily. As to quaternary structure, homodimer.

Its subcellular location is the cytoplasm. It carries out the reaction XMP + diphosphate = xanthine + 5-phospho-alpha-D-ribose 1-diphosphate. It functions in the pathway purine metabolism; XMP biosynthesis via salvage pathway; XMP from xanthine: step 1/1. Its function is as follows. Converts the preformed base xanthine, a product of nucleic acid breakdown, to xanthosine 5'-monophosphate (XMP), so it can be reused for RNA or DNA synthesis. The polypeptide is Xanthine phosphoribosyltransferase (Pseudomonas putida (strain ATCC 700007 / DSM 6899 / JCM 31910 / BCRC 17059 / LMG 24140 / F1)).